The primary structure comprises 141 residues: Hemoglobin subunit alpha-A (141 aa).

Positions 1 to 141 constitute a Globin domain; the sequence is MLSASDKANV…VGLVLTAKYR (141 aa). Residue histidine 58 coordinates O2. Histidine 87 contacts heme b.

This sequence belongs to the globin family. In terms of assembly, there are three forms of hemoglobin in Sphenodon: A, A' and D. Hb A is a tetramer of two alpha-A and two beta-1, Hb A' is a tetramer of two alpha-a and two beta-2, Hb D is a tetramer of two alpha-D and two beta-2. In terms of tissue distribution, red blood cells.

Its function is as follows. Involved in oxygen transport from the lung to the various peripheral tissues. This is Hemoglobin subunit alpha-A (HBAA) from Sphenodon punctatus (Tuatara).